Here is a 486-residue protein sequence, read N- to C-terminus: BTB/POZ domain and ankyrin repeat-containing protein BOP (486 aa).

Positions 25–115 (SDVTFSVEGR…LYSGQVSIVP (91 aa)) constitute a BTB domain. The segment at 121–135 (RPNCGERGCWHTHCS) adopts a C2HC NPR-type zinc-finger fold. Cysteine 124, cysteine 129, histidine 131, and cysteine 134 together coordinate Zn(2+). 4 ANK repeats span residues 257 to 286 (QKIRRMRRALDSSDVELVKLMVMGEGLNLD), 287 to 316 (EALALHYAVENCSREVAKALLELGAADVNY), 321 to 350 (AGKTPLHIAAEMVSPDMVAVLLDHHADPNV), and 354 to 388 (DNVTPLDILRTLTSDFLFKGAIPGLTHIEPNKLRL). Disordered regions lie at residues 403–442 (EEGNANNNPPSSTTTTLPMYHHPMNDDHNSSSSSGNNHNI) and 464–486 (QMSDDHGGRHGDPAMYHHSHHDY). Composition is skewed to low complexity over residues 406–418 (NANNNPPSSTTTT) and 432–442 (SSSSSGNNHNI). The span at 466 to 475 (SDDHGGRHGD) shows a compositional bias: basic and acidic residues.

This sequence belongs to the plant 'ANKYRIN-BTB/POZ' family. 'NOOT-BOP-COCH-like' (NBCL) subfamily. As to quaternary structure, homodimer. As to expression, expressed in xylem vessels and parenchyma cells of pedicel vascular tissue in the abscission zone (AZ). Accumulates in developing root nodules and present in roots, especially in the upper part.

The protein localises to the nucleus. The protein resides in the cytoplasm. Its subcellular location is the cell membrane. Its pathway is protein modification; protein ubiquitination. May act as a substrate-specific adapter of an E3 ubiquitin-protein ligase complex (CUL3-RBX1-BTB) which mediates the ubiquitination and subsequent proteasomal degradation of target proteins. Transcriptional co-regulator involved in promoting the fate and determination of leaf and flower meristems. Required for the abscission of senescent organs, probably by regulating the cell wall disorganization in abscission zones (AZs, e.g. pulvini at the base of leaves). Involved in the coordination of the symbiotic nodule developmental program; promotes the formation of root nodules by interacting directly with APP1 to modulate the expression of the nuclear transcription factor Y subunit (NF-YA1), a key nodulin. Necessary for the robust maintenance of nodule identity throughout the nodule developmental program. In Lupinus luteus (European yellow lupine), this protein is BTB/POZ domain and ankyrin repeat-containing protein BOP.